The following is a 201-amino-acid chain: ATP-dependent Clp protease proteolytic subunit (201 aa).

Residue Ser-101 is the Nucleophile of the active site. Residue His-126 is part of the active site.

It belongs to the peptidase S14 family. As to quaternary structure, component of the chloroplastic Clp protease core complex.

It localises to the plastid. The protein localises to the chloroplast stroma. It carries out the reaction Hydrolysis of proteins to small peptides in the presence of ATP and magnesium. alpha-casein is the usual test substrate. In the absence of ATP, only oligopeptides shorter than five residues are hydrolyzed (such as succinyl-Leu-Tyr-|-NHMec, and Leu-Tyr-Leu-|-Tyr-Trp, in which cleavage of the -Tyr-|-Leu- and -Tyr-|-Trp bonds also occurs).. Functionally, cleaves peptides in various proteins in a process that requires ATP hydrolysis. Has a chymotrypsin-like activity. Plays a major role in the degradation of misfolded proteins. This is ATP-dependent Clp protease proteolytic subunit from Chlorella vulgaris (Green alga).